A 197-amino-acid polypeptide reads, in one-letter code: 3-isopropylmalate dehydratase small subunit (197 aa).

This sequence belongs to the LeuD family. LeuD type 1 subfamily. In terms of assembly, heterodimer of LeuC and LeuD.

The enzyme catalyses (2R,3S)-3-isopropylmalate = (2S)-2-isopropylmalate. The protein operates within amino-acid biosynthesis; L-leucine biosynthesis; L-leucine from 3-methyl-2-oxobutanoate: step 2/4. Its function is as follows. Catalyzes the isomerization between 2-isopropylmalate and 3-isopropylmalate, via the formation of 2-isopropylmaleate. The sequence is that of 3-isopropylmalate dehydratase small subunit from Corynebacterium glutamicum (strain ATCC 13032 / DSM 20300 / JCM 1318 / BCRC 11384 / CCUG 27702 / LMG 3730 / NBRC 12168 / NCIMB 10025 / NRRL B-2784 / 534).